The sequence spans 535 residues: EGF domain-specific O-linked N-acetylglucosamine transferase (535 aa).

A signal peptide spans 1–16 (MFILLMFVLLLQEILA). Residues N22 and N271 are each glycosylated (N-linked (GlcNAc...) asparagine). The short motif at 303–305 (DYD) is the Required for optimal activity element. N-linked (GlcNAc...) asparagine glycans are attached at residues N362 and N501.

The protein belongs to the glycosyltransferase 61 family.

The protein localises to the endoplasmic reticulum lumen. It carries out the reaction L-seryl-[protein] + UDP-N-acetyl-alpha-D-glucosamine = 3-O-(N-acetyl-beta-D-glucosaminyl)-L-seryl-[protein] + UDP + H(+). It catalyses the reaction L-threonyl-[protein] + UDP-N-acetyl-alpha-D-glucosamine = 3-O-(N-acetyl-beta-D-glucosaminyl)-L-threonyl-[protein] + UDP + H(+). In terms of biological role, catalyzes the transfer of a single N-acetylglucosamine from UDP-GlcNAc to a serine or threonine residue in extracellular proteins resulting in their modification with a beta-linked N-acetylglucosamine (O-GlcNAc). Specifically glycosylates the Thr residue located between the fifth and sixth conserved cysteines of folded EGF-like domains. The chain is EGF domain-specific O-linked N-acetylglucosamine transferase (EOGT) from Gallus gallus (Chicken).